Reading from the N-terminus, the 74-residue chain is MSRFFRRRKYCRFTAEGVEFIDYKDLNTLKNYITETGKIVPSRITGTSARYQRQLATAVKRARYLALLPYCDNH.

It belongs to the bacterial ribosomal protein bS18 family. Part of the 30S ribosomal subunit. Forms a tight heterodimer with protein bS6.

Functionally, binds as a heterodimer with protein bS6 to the central domain of the 16S rRNA, where it helps stabilize the platform of the 30S subunit. The protein is Small ribosomal subunit protein bS18 of Thioalkalivibrio sulfidiphilus (strain HL-EbGR7).